A 448-amino-acid chain; its full sequence is Chromosomal replication initiator protein DnaA 1 (448 aa).

A domain I, interacts with DnaA modulators region spans residues 1–76 (MLTSETQNVW…FLPVDMSGEP (76 aa)). The domain II stretch occupies residues 76–111 (PAIRFIIAPPQKKIIPPNHFSISSSQKEEQSPNSDV). Positions 112-328 (KLNNNYRFEN…GAINRLSAHC (217 aa)) are domain III, AAA+ region. Glycine 156, glycine 158, lysine 159, and threonine 160 together coordinate ATP. The domain IV, binds dsDNA stretch occupies residues 329–448 (RLLDLNITEE…IGMVRRNIES (120 aa)).

This sequence belongs to the DnaA family. As to quaternary structure, oligomerizes as a right-handed, spiral filament on DNA at oriC.

The protein resides in the cytoplasm. Its function is as follows. Plays an essential role in the initiation and regulation of chromosomal replication. ATP-DnaA binds to the origin of replication (oriC) to initiate formation of the DNA replication initiation complex once per cell cycle. Binds the DnaA box (a 9 base pair repeat at the origin) and separates the double-stranded (ds)DNA. Forms a right-handed helical filament on oriC DNA; dsDNA binds to the exterior of the filament while single-stranded (ss)DNA is stabiized in the filament's interior. The ATP-DnaA-oriC complex binds and stabilizes one strand of the AT-rich DNA unwinding element (DUE), permitting loading of DNA polymerase. After initiation quickly degrades to an ADP-DnaA complex that is not apt for DNA replication. Binds acidic phospholipids. In Protochlamydia amoebophila (strain UWE25), this protein is Chromosomal replication initiator protein DnaA 1.